We begin with the raw amino-acid sequence, 1210 residues long: Histone-lysine N-methyltransferase EHMT2 (1210 aa).

A compositionally biased stretch (low complexity) spans 1-23 (MAAAAGAAAAAAAEGEAPAEMGA). Disordered regions lie at residues 1 to 262 (MAAA…LEEW) and 280 to 386 (DERV…EYME). Alanine 2 is subject to N-acetylalanine. Basic and acidic residues predominate over residues 26–38 (LEKETRGATERVH). Serine 40 bears the Phosphoserine mark. Threonine 44 is subject to Phosphothreonine. Serine 47 carries the post-translational modification Phosphoserine. Over residues 105–128 (GRILLGHATKSFPSSPSKGGSCPS) the composition is skewed to low complexity. Position 140 is a phosphoserine (serine 140). Residues 155–165 (PGAQGAAAAGS) show a composition bias toward low complexity. Serine 173 carries the phosphoserine modification. Lysine 185 carries the post-translational modification N6,N6,N6-trimethyllysine; by EHMT2; alternate. Lysine 185 carries the post-translational modification N6,N6-dimethyllysine; by EHMT2; alternate. Residues 198 to 216 (PEKRPPEIQHFRMSDDVHS) show a composition bias toward basic and acidic residues. Glycyl lysine isopeptide (Lys-Gly) (interchain with G-Cter in SUMO2) cross-links involve residues lysine 219 and lysine 229. Phosphoserine occurs at positions 232, 242, and 246. Basic and acidic residues predominate over residues 280 to 291 (DERVDSDSKSEV). Positions 298 to 327 (LSEEEEEEEEEEEEEEEEEEEEEEEEDEES) are enriched in acidic residues. The segment covering 338-347 (GRRKAKKKWR) has biased composition (basic residues). Phosphoserine occurs at positions 350, 412, and 413. The disordered stretch occupies residues 548–608 (IPRGDGVTPP…LADTIDSSGP (61 aa)). Phosphothreonine is present on threonine 555. Position 569 is a phosphoserine (serine 569). Residue lysine 634 forms a Glycyl lysine isopeptide (Lys-Gly) (interchain with G-Cter in SUMO2) linkage. ANK repeat units follow at residues 649–678 (FHPR…DPNF), 684–713 (SKRT…NINA), 717–746 (QQRT…CVYS), 750–780 (DGST…DVNA), 784–813 (GGWT…DVTL), 817–846 (EENI…DLHA), and 850–879 (HGDT…NPEL). The interval 817-819 (EEN) is histone H3K9me binding. The region spanning 972–1035 (QHCTCVDDCS…NCKNRVVQSG (64 aa)) is the Pre-SET domain. 9 residues coordinate Zn(2+): cysteine 974, cysteine 976, cysteine 980, cysteine 985, cysteine 987, cysteine 1017, cysteine 1021, cysteine 1023, and cysteine 1027. Residues 1038-1155 (VRLQLYRTAK…TGEELGFDYG (118 aa)) enclose the SET domain. S-adenosyl-L-methionine is bound by residues 1048-1050 (MGW), tyrosine 1085, and 1112-1113 (NH). The interval 1074–1093 (DAEADVREDDSYLFDLDNKD) is interaction with histone H3. A Zn(2+)-binding site is contributed by cysteine 1115. The interaction with histone H3 stretch occupies residues 1154-1157 (YGDR). The 17-residue stretch at 1164-1180 (KYFTCQCGSEKCKHSAE) folds into the Post-SET domain. Cysteine 1168 contributes to the Zn(2+) binding site. Glutamine 1169 contacts S-adenosyl-L-methionine. Residues cysteine 1170 and cysteine 1175 each coordinate Zn(2+). Phosphoserine is present on serine 1204. Threonine 1210 carries the post-translational modification Phosphothreonine.

Belongs to the class V-like SAM-binding methyltransferase superfamily. Histone-lysine methyltransferase family. Suvar3-9 subfamily. Heterodimer; heterodimerizes with EHMT1/GLP. Interacts with GFI1B and WIZ. Part of the E2F6.com-1 complex in G0 phase composed of E2F6, MGA, MAX, TFDP1, CBX3, BAT8, EHMT1, RING1, RNF2, MBLR, L3MBTL2 and YAF2. Part of a complex composed of TRIM28, HDAC1, HDAC2 and EHMT2. Interacts with UHRF1. Interacts with CDYL. Interacts with REST only in the presence of CDYL. Part of a complex containing at least CDYL, REST, WIZ, SETB1, EHMT1 and EHMT2. Interacts with PRDM9 and CDYL; interaction only takes place when PRDM9 is bound to hotspot DNA. Interacts with SMYD5. In terms of processing, methylated at Lys-185; automethylated. In terms of tissue distribution, expressed in all tissues examined, with high levels in fetal liver, thymus, lymph node, spleen and peripheral blood leukocytes and lower level in bone marrow.

The protein localises to the nucleus. Its subcellular location is the chromosome. The catalysed reaction is N(6)-methyl-L-lysyl(9)-[histone H3] + S-adenosyl-L-methionine = N(6),N(6)-dimethyl-L-lysyl(9)-[histone H3] + S-adenosyl-L-homocysteine + H(+). The enzyme catalyses L-lysyl(9)-[histone H3] + S-adenosyl-L-methionine = N(6)-methyl-L-lysyl(9)-[histone H3] + S-adenosyl-L-homocysteine + H(+). Functionally, histone methyltransferase that specifically mono- and dimethylates 'Lys-9' of histone H3 (H3K9me1 and H3K9me2, respectively) in euchromatin. H3K9me represents a specific tag for epigenetic transcriptional repression by recruiting HP1 proteins to methylated histones. Also mediates monomethylation of 'Lys-56' of histone H3 (H3K56me1) in G1 phase, leading to promote interaction between histone H3 and PCNA and regulating DNA replication. Also weakly methylates 'Lys-27' of histone H3 (H3K27me). Also required for DNA methylation, the histone methyltransferase activity is not required for DNA methylation, suggesting that these 2 activities function independently. Probably targeted to histone H3 by different DNA-binding proteins like E2F6, MGA, MAX and/or DP1. May also methylate histone H1. In addition to the histone methyltransferase activity, also methylates non-histone proteins: mediates dimethylation of 'Lys-373' of p53/TP53. Also methylates CDYL, WIZ, ACIN1, DNMT1, HDAC1, ERCC6, KLF12 and itself. In Homo sapiens (Human), this protein is Histone-lysine N-methyltransferase EHMT2 (EHMT2).